The following is a 163-amino-acid chain: Small ribosomal subunit protein uS3m (163 aa).

The N-terminal 31 residues, Met1 to Leu31, are a transit peptide targeting the mitochondrion.

It belongs to the universal ribosomal protein uS3 family. Component of the mitochondrial ribosome small subunit (28S) which comprises a 12S rRNA and about 30 distinct proteins.

It is found in the mitochondrion. The polypeptide is Small ribosomal subunit protein uS3m (mrps24) (Danio rerio (Zebrafish)).